The sequence spans 339 residues: Phytoene synthase (339 aa).

This sequence belongs to the phytoene/squalene synthase family. ATP is required as a cofactor. Mn(2+) serves as cofactor. Requires Mg(2+) as cofactor.

It functions in the pathway carotenoid biosynthesis; phytoene biosynthesis. In terms of biological role, involved in the biosynthesis of carotenoids. Catalyzes the condensation of two molecules of geranylgeranyl diphosphate (GGPP) to give prephytoene diphosphate (PPPP) and the subsequent rearrangement of the cyclopropylcarbinyl intermediate to yield phytoene. The protein is Phytoene synthase (crtB) of Rhodobacter capsulatus (strain ATCC BAA-309 / NBRC 16581 / SB1003).